Here is a 245-residue protein sequence, read N- to C-terminus: DNA polymerase zeta processivity subunit (245 aa).

The HORMA domain maps to 3 to 203; that stretch reads RWVEKWLRVY…PPKIKLTSLV (201 aa).

This sequence belongs to the MAD2 family. Forms DNA polymerase zeta with REV3. Interacts with REV1.

It localises to the mitochondrion. Its function is as follows. Required for DNA damage induced mutagenesis. Involved in DNA repair, mitochondrial DNA repair and translesion synthesis. Has a role in the bypass of abasic (AP) sites. The protein is DNA polymerase zeta processivity subunit (REV7) of Saccharomyces cerevisiae (strain ATCC 204508 / S288c) (Baker's yeast).